Here is a 397-residue protein sequence, read N- to C-terminus: MIRYFTAGESHGPALSAIVEGLPAGLTVTPEDINKELARRQQGYGRGGRMKIETDKADVLSGIRFGKTIGSPVTLQVENRDWKNWTVKMARFDTPAEEIPAITVPRPGHADLTGMIKYGFEDIRPVIERASARETAARVAACALAKVFLRSAGIQIGSYVSSIGAAGKTAPSPRLHELLDAGAETLAEEADASSVRMLEKEHETHAIAAIDKAKEEGDTLGGIIELFITGVPMGLGSYVQHDRRLDAELAAALISIQAVKGVEIGTAFENARKPGSQVHDALFLRKGDGPERKTNRAGGIEGSMTNGQIIHLRAAMKPIATLMSPLQSFDIRSLDAHLSHIERSDTCAVPACSVIAEAVIAPVIANALLRKTGGDHLEEILERLEAYKADIAKNFQP.

Arg-40 and Arg-46 together coordinate NADP(+). Residues 129–131 (RAS), 257–258 (QA), Gly-302, 317–321 (KPIAT), and Arg-343 contribute to the FMN site.

The protein belongs to the chorismate synthase family. Homotetramer. Requires FMNH2 as cofactor.

It carries out the reaction 5-O-(1-carboxyvinyl)-3-phosphoshikimate = chorismate + phosphate. It functions in the pathway metabolic intermediate biosynthesis; chorismate biosynthesis; chorismate from D-erythrose 4-phosphate and phosphoenolpyruvate: step 7/7. In terms of biological role, catalyzes the anti-1,4-elimination of the C-3 phosphate and the C-6 proR hydrogen from 5-enolpyruvylshikimate-3-phosphate (EPSP) to yield chorismate, which is the branch point compound that serves as the starting substrate for the three terminal pathways of aromatic amino acid biosynthesis. This reaction introduces a second double bond into the aromatic ring system. This Chlorobium phaeobacteroides (strain BS1) protein is Chorismate synthase.